A 476-amino-acid polypeptide reads, in one-letter code: Ribosomal protein uS12 methylthiotransferase RimO (476 aa).

Positions Asn33–Pro143 constitute an MTTase N-terminal domain. The [4Fe-4S] cluster site is built by Cys42, Cys78, Cys107, Cys175, Cys179, and Cys182. The Radical SAM core domain maps to Leu161–Glu398. The 67-residue stretch at Ala401–Asp467 folds into the TRAM domain.

It belongs to the methylthiotransferase family. RimO subfamily. Requires [4Fe-4S] cluster as cofactor.

The protein localises to the cytoplasm. It carries out the reaction L-aspartate(89)-[ribosomal protein uS12]-hydrogen + (sulfur carrier)-SH + AH2 + 2 S-adenosyl-L-methionine = 3-methylsulfanyl-L-aspartate(89)-[ribosomal protein uS12]-hydrogen + (sulfur carrier)-H + 5'-deoxyadenosine + L-methionine + A + S-adenosyl-L-homocysteine + 2 H(+). Functionally, catalyzes the methylthiolation of an aspartic acid residue of ribosomal protein uS12. The protein is Ribosomal protein uS12 methylthiotransferase RimO of Shewanella sp. (strain MR-4).